Consider the following 293-residue polypeptide: tRNA pseudouridine synthase B (293 aa).

Aspartate 39 (nucleophile) is an active-site residue.

This sequence belongs to the pseudouridine synthase TruB family. Type 1 subfamily.

It catalyses the reaction uridine(55) in tRNA = pseudouridine(55) in tRNA. Functionally, responsible for synthesis of pseudouridine from uracil-55 in the psi GC loop of transfer RNAs. The polypeptide is tRNA pseudouridine synthase B (Streptococcus thermophilus (strain CNRZ 1066)).